A 347-amino-acid polypeptide reads, in one-letter code: tRNA N6-adenosine threonylcarbamoyltransferase (347 aa).

Fe cation-binding residues include H115 and H119. Residues 137 to 141 (LASGG), D170, G183, and N281 each bind substrate. Residue D309 participates in Fe cation binding.

This sequence belongs to the KAE1 / TsaD family. It depends on Fe(2+) as a cofactor.

The protein localises to the cytoplasm. It carries out the reaction L-threonylcarbamoyladenylate + adenosine(37) in tRNA = N(6)-L-threonylcarbamoyladenosine(37) in tRNA + AMP + H(+). Functionally, required for the formation of a threonylcarbamoyl group on adenosine at position 37 (t(6)A37) in tRNAs that read codons beginning with adenine. Is involved in the transfer of the threonylcarbamoyl moiety of threonylcarbamoyl-AMP (TC-AMP) to the N6 group of A37, together with TsaE and TsaB. TsaD likely plays a direct catalytic role in this reaction. The polypeptide is tRNA N6-adenosine threonylcarbamoyltransferase (Methylorubrum extorquens (strain CM4 / NCIMB 13688) (Methylobacterium extorquens)).